A 129-amino-acid polypeptide reads, in one-letter code: Acyl carrier protein 2, chloroplastic (129 aa).

A chloroplast-targeting transit peptide spans 1–49 (MASAAASAVSFARPVKAICVNSVSFSALRKDNVSFRLQPVPQRFSVCCA). The region spanning 52-127 (KETVEKVCDI…DAANLIDSLV (76 aa)) is the Carrier domain. Ser87 bears the O-(pantetheine 4'-phosphoryl)serine mark.

The protein belongs to the acyl carrier protein (ACP) family. 4'-phosphopantetheine is transferred from CoA to a specific serine of apo-ACP by acpS. This modification is essential for activity because fatty acids are bound in thioester linkage to the sulfhydryl of the prosthetic group.

It is found in the plastid. The protein localises to the chloroplast. The protein operates within lipid metabolism; fatty acid biosynthesis. Its function is as follows. Carrier of the growing fatty acid chain in fatty acid biosynthesis. This chain is Acyl carrier protein 2, chloroplastic (ACL1.2), found in Hordeum vulgare (Barley).